The primary structure comprises 410 residues: 2-oxoisovalerate dehydrogenase subunit alpha (410 aa).

Belongs to the BCKDHA family. As to quaternary structure, heterodimer of an alpha and a beta chain. Thiamine diphosphate serves as cofactor.

It catalyses the reaction N(6)-[(R)-lipoyl]-L-lysyl-[protein] + 3-methyl-2-oxobutanoate + H(+) = N(6)-[(R)-S(8)-2-methylpropanoyldihydrolipoyl]-L-lysyl-[protein] + CO2. In terms of biological role, the branched-chain alpha-keto dehydrogenase complex catalyzes the overall conversion of alpha-keto acids to acyl-CoA and CO(2). It contains multiple copies of three enzymatic components: branched-chain alpha-keto acid decarboxylase (E1), lipoamide acyltransferase (E2) and lipoamide dehydrogenase (E3). The chain is 2-oxoisovalerate dehydrogenase subunit alpha (bkdA1) from Pseudomonas putida (Arthrobacter siderocapsulatus).